The sequence spans 104 residues: A-type ATP synthase subunit F (104 aa).

The protein belongs to the V-ATPase F subunit family. In terms of assembly, has multiple subunits with at least A(3), B(3), C, D, E, F, H, I and proteolipid K(x).

It is found in the cell membrane. In terms of biological role, component of the A-type ATP synthase that produces ATP from ADP in the presence of a proton gradient across the membrane. The protein is A-type ATP synthase subunit F of Thermoplasma volcanium (strain ATCC 51530 / DSM 4299 / JCM 9571 / NBRC 15438 / GSS1).